We begin with the raw amino-acid sequence, 193 residues long: Phosphoheptose isomerase (193 aa).

An SIS domain is found at 37 to 193; sequence LAASFKADGK…QLIEKEMASV (157 aa). 52 to 54 contacts substrate; that stretch reads NGG. Zn(2+) is bound by residues histidine 61 and glutamate 65. Residues glutamate 65, 93–94, 119–121, serine 124, and glutamine 172 each bind substrate; these read ND and STS. Zn(2+) contacts are provided by glutamine 172 and histidine 180.

Belongs to the SIS family. GmhA subfamily. In terms of assembly, homotetramer. Zn(2+) is required as a cofactor.

The protein resides in the cytoplasm. It carries out the reaction 2 D-sedoheptulose 7-phosphate = D-glycero-alpha-D-manno-heptose 7-phosphate + D-glycero-beta-D-manno-heptose 7-phosphate. Its pathway is carbohydrate biosynthesis; D-glycero-D-manno-heptose 7-phosphate biosynthesis; D-glycero-alpha-D-manno-heptose 7-phosphate and D-glycero-beta-D-manno-heptose 7-phosphate from sedoheptulose 7-phosphate: step 1/1. Its function is as follows. Catalyzes the isomerization of sedoheptulose 7-phosphate in D-glycero-D-manno-heptose 7-phosphate. The polypeptide is Phosphoheptose isomerase (Edwardsiella ictaluri (strain 93-146)).